We begin with the raw amino-acid sequence, 311 residues long: MVSTATQIGHFSFDNCLMNAAGVYCMTKEELMEVEKSQAASFVTKTGTLEVRPGNPEPRYADTRLGSINSMGLPNNGFRYYLDFVSDLAKTGQHKPHFLSVVGLSPTETETILKVIMASDYEGLVELNLSCPNVPGKPQIAYDFETTDQLLENIFTYYTKPLGIKLPPYFDIVHFDQAAAIFNKYPLSFVNCVNSIGNGLVIEDEQVLIKPKNGFGGIGGDYIKPTALANVHAFYKRLKPSIHIIGTGGIKTGRDAFEHILCGASMVQIGTALHQEGPAIFERVTKELKTIMVEKGYQSLDDFRGNLRYKD.

Residues K45, 69-73 (NSMGL), and N128 contribute to the substrate site. Residue 45–46 (KT) participates in FMN binding. Position 128 (N128) interacts with FMN. Residue C131 is the Nucleophile of the active site. 2 residues coordinate FMN: K165 and V193. Substrate is bound at residue 194-195 (NS). Residues G220, 248 to 249 (GG), and 270 to 271 (GT) each bind FMN.

It belongs to the dihydroorotate dehydrogenase family. Type 1 subfamily. As to quaternary structure, homodimer. It depends on FMN as a cofactor.

It localises to the cytoplasm. The enzyme catalyses (S)-dihydroorotate + fumarate = orotate + succinate. The protein operates within pyrimidine metabolism; UMP biosynthesis via de novo pathway. Catalyzes the conversion of dihydroorotate to orotate with fumarate as the electron acceptor. The chain is Putative dihydroorotate dehydrogenase A (fumarate) (pyrD) from Streptococcus pyogenes serotype M3 (strain SSI-1).